We begin with the raw amino-acid sequence, 549 residues long: Oxygen-dependent choline dehydrogenase (549 aa).

Residue 4–33 (DFVIIGSGSAGSAMAYRLSEDGRYSVIVIE) participates in FAD binding. His-465 functions as the Proton acceptor in the catalytic mechanism.

The protein belongs to the GMC oxidoreductase family. The cofactor is FAD.

The catalysed reaction is choline + A = betaine aldehyde + AH2. It carries out the reaction betaine aldehyde + NAD(+) + H2O = glycine betaine + NADH + 2 H(+). It participates in amine and polyamine biosynthesis; betaine biosynthesis via choline pathway; betaine aldehyde from choline (cytochrome c reductase route): step 1/1. Its function is as follows. Involved in the biosynthesis of the osmoprotectant glycine betaine. Catalyzes the oxidation of choline to betaine aldehyde and betaine aldehyde to glycine betaine at the same rate. The sequence is that of Oxygen-dependent choline dehydrogenase from Brucella ovis (strain ATCC 25840 / 63/290 / NCTC 10512).